The sequence spans 311 residues: Aspartate carbamoyltransferase catalytic subunit (311 aa).

Residues R55 and T56 each coordinate carbamoyl phosphate. L-aspartate is bound at residue K85. Carbamoyl phosphate is bound by residues R106, H135, and Q138. R168 and R230 together coordinate L-aspartate. Positions 268 and 269 each coordinate carbamoyl phosphate.

It belongs to the aspartate/ornithine carbamoyltransferase superfamily. ATCase family. As to quaternary structure, heterododecamer (2C3:3R2) of six catalytic PyrB chains organized as two trimers (C3), and six regulatory PyrI chains organized as three dimers (R2).

The enzyme catalyses carbamoyl phosphate + L-aspartate = N-carbamoyl-L-aspartate + phosphate + H(+). The protein operates within pyrimidine metabolism; UMP biosynthesis via de novo pathway; (S)-dihydroorotate from bicarbonate: step 2/3. Catalyzes the condensation of carbamoyl phosphate and aspartate to form carbamoyl aspartate and inorganic phosphate, the committed step in the de novo pyrimidine nucleotide biosynthesis pathway. This Yersinia pseudotuberculosis serotype IB (strain PB1/+) protein is Aspartate carbamoyltransferase catalytic subunit.